Reading from the N-terminus, the 95-residue chain is Aspartyl/glutamyl-tRNA(Asn/Gln) amidotransferase subunit C (95 aa).

Basic and acidic residues predominate over residues 55-67 (ALERRNVTREDQV). The segment at 55–83 (ALERRNVTREDQVHNSLTNDKALENAPET) is disordered.

This sequence belongs to the GatC family. Heterotrimer of A, B and C subunits.

It carries out the reaction L-glutamyl-tRNA(Gln) + L-glutamine + ATP + H2O = L-glutaminyl-tRNA(Gln) + L-glutamate + ADP + phosphate + H(+). The catalysed reaction is L-aspartyl-tRNA(Asn) + L-glutamine + ATP + H2O = L-asparaginyl-tRNA(Asn) + L-glutamate + ADP + phosphate + 2 H(+). Functionally, allows the formation of correctly charged Asn-tRNA(Asn) or Gln-tRNA(Gln) through the transamidation of misacylated Asp-tRNA(Asn) or Glu-tRNA(Gln) in organisms which lack either or both of asparaginyl-tRNA or glutaminyl-tRNA synthetases. The reaction takes place in the presence of glutamine and ATP through an activated phospho-Asp-tRNA(Asn) or phospho-Glu-tRNA(Gln). The chain is Aspartyl/glutamyl-tRNA(Asn/Gln) amidotransferase subunit C from Natranaerobius thermophilus (strain ATCC BAA-1301 / DSM 18059 / JW/NM-WN-LF).